Consider the following 528-residue polypeptide: Nucleobase-ascorbate transporter 5 (528 aa).

A disordered region spans residues 1–20 (MSAPKSGGDPLPHPPKEQLP). Transmembrane regions (helical) follow at residues 35-55 (AVLL…LIPS), 71-91 (LIQT…VFGT), 93-113 (LPAV…IMLS), 133-153 (TQGA…SGLW), 159-179 (FLSP…LYEL), 181-201 (FPGV…LILI), 219-239 (FAVI…TLGG), 285-305 (FAMM…FIAV), 367-387 (AGFM…ASIP), 390-410 (IIAA…LSLL), 418-438 (FRTL…PQYF), and 460-479 (MVNV…AYLL).

It belongs to the nucleobase:cation symporter-2 (NCS2) (TC 2.A.40) family. In terms of tissue distribution, weakly expressed in the vasculature of developing leaves.

Its subcellular location is the membrane. The chain is Nucleobase-ascorbate transporter 5 (NAT5) from Arabidopsis thaliana (Mouse-ear cress).